Here is a 21-residue protein sequence, read N- to C-terminus: Fibrinogen beta chain (21 aa).

A compositionally biased stretch (acidic residues) spans 1–11 (EFPTDYDEGED). A disordered region spans residues 1–21 (EFPTDYDEGEDDRPKVGLGAR). At Tyr6 the chain carries Sulfotyrosine.

Heterohexamer; disulfide linked. Contains 2 sets of 3 non-identical chains (alpha, beta and gamma). The 2 heterotrimers are in head to head conformation with the N-termini in a small central domain. Conversion of fibrinogen to fibrin is triggered by thrombin, which cleaves fibrinopeptides A and B from alpha and beta chains, and thus exposes the N-terminal polymerization sites responsible for the formation of the soft clot.

Its subcellular location is the secreted. In terms of biological role, cleaved by the protease thrombin to yield monomers which, together with fibrinogen alpha (FGA) and fibrinogen gamma (FGG), polymerize to form an insoluble fibrin matrix. Fibrin has a major function in hemostasis as one of the primary components of blood clots. In addition, functions during the early stages of wound repair to stabilize the lesion and guide cell migration during re-epithelialization. Was originally thought to be essential for platelet aggregation, based on in vitro studies using anticoagulated blood. However subsequent studies have shown that it is not absolutely required for thrombus formation in vivo. Enhances expression of SELP in activated platelets. Maternal fibrinogen is essential for successful pregnancy. Fibrin deposition is also associated with infection, where it protects against IFNG-mediated hemorrhage. May also facilitate the antibacterial immune response via both innate and T-cell mediated pathways. In Bison bonasus (European bison), this protein is Fibrinogen beta chain (FGB).